We begin with the raw amino-acid sequence, 597 residues long: MAFRVLLLFSLTALLIFSAVSPSFAASSSDDVDDEDLSFLEDLKEDDVPGADSLSSSTGFDEFEGGEEEDPDMYNDDDDEEGDFSDLGNPDSDPLPTPEIDEKDVVVIKERNFTDVIENNQYVLVEFYAPWCGHCQSLAPEYAAAATELKEDGVVLAKIDATEENELAQEYRVQGFPTLLFFVDGEHKPYTGGRTKETIVTWVKKKIGPGVYNLTTLDDAEKVLTSGNKVVLGYLNSLVGVEHDQLNAASKAEDDVNFYQTVNPDVAKMFHLDPESKRPALVLVKKEEEKISHFDGEFVKSALVSFVSANKLALVSVFTRETAPEIFESAIKKQLLLFVTKNESEKVLTEFQEAAKSFKGKLIFVSVDLDNEDYGKPVAEYFGVSGNGPKLIGYTGNEDPKKYFFDGEIQSDKIKIFGEDFLNDKLKPFYKSDPIPEKNDEDVKIVVGDNFDEIVLDDSKDVLLEVYAPWCGHCQALEPMYNKLAKHLRSIDSLVITKMDGTTNEHPKAKAEGFPTILFFPAGNKTSEPITVDTDRTVVAFYKFLRKHATIPFKLEKPASTESPKTAESTPKVETTETKESPDSTTKSSQSDSKDEL.

The first 25 residues, 1–25 (MAFRVLLLFSLTALLIFSAVSPSFA), serve as a signal peptide directing secretion. Composition is skewed to acidic residues over residues 37–49 (LSFLEDLKEDDVP) and 61–84 (DEFEGGEEEDPDMYNDDDDEEGDF). Positions 37-101 (LSFLEDLKED…SDPLPTPEID (65 aa)) are disordered. The 124-residue stretch at 85-208 (SDLGNPDSDP…IVTWVKKKIG (124 aa)) folds into the Thioredoxin 1 domain. The N-linked (GlcNAc...) asparagine glycan is linked to Asn-112. Residues Cys-132 and Cys-135 each act as nucleophile in the active site. Cys-132 and Cys-135 form a disulfide bridge. N-linked (GlcNAc...) asparagine glycosylation is found at Asn-213 and Asn-342. Residues 429–550 (FYKSDPIPEK…FYKFLRKHAT (122 aa)) form the Thioredoxin 2 domain. Active-site nucleophile residues include Cys-471 and Cys-474. Cys-471 and Cys-474 are joined by a disulfide. The N-linked (GlcNAc...) asparagine glycan is linked to Asn-524. The segment at 555-597 (LEKPASTESPKTAESTPKVETTETKESPDSTTKSSQSDSKDEL) is disordered. Over residues 560–573 (STESPKTAESTPKV) the composition is skewed to polar residues. The Prevents secretion from ER signature appears at 594–597 (KDEL).

It belongs to the protein disulfide isomerase family. In terms of assembly, interacts with MEE8 and MED37A. As to expression, expressed in germinating seedling, including the cotyledons and hypocotyl, in vascular tissues, in pollen grains, root tips, leaf trichomes, developing seeds and siliques.

It is found in the endoplasmic reticulum lumen. The protein localises to the golgi apparatus. It localises to the vacuole. Its subcellular location is the nucleus. The protein resides in the secreted. It is found in the cell wall. The catalysed reaction is Catalyzes the rearrangement of -S-S- bonds in proteins.. In terms of biological role, acts as a protein-folding catalyst that interacts with nascent polypeptides to catalyze the formation, isomerization, and reduction or oxidation of disulfide bonds. The chain is Protein disulfide isomerase-like 1-4 (PDIL1-4) from Arabidopsis thaliana (Mouse-ear cress).